Here is a 1342-residue protein sequence, read N- to C-terminus: DNA-directed RNA polymerase subunit beta (1342 aa).

Belongs to the RNA polymerase beta chain family. As to quaternary structure, the RNAP catalytic core consists of 2 alpha, 1 beta, 1 beta' and 1 omega subunit. When a sigma factor is associated with the core the holoenzyme is formed, which can initiate transcription.

The enzyme catalyses RNA(n) + a ribonucleoside 5'-triphosphate = RNA(n+1) + diphosphate. DNA-dependent RNA polymerase catalyzes the transcription of DNA into RNA using the four ribonucleoside triphosphates as substrates. The polypeptide is DNA-directed RNA polymerase subunit beta (Glaesserella parasuis serovar 5 (strain SH0165) (Haemophilus parasuis)).